Consider the following 195-residue polypeptide: Pyruvoyl-dependent arginine decarboxylase AaxB (195 aa).

Ser-53 carries the post-translational modification Pyruvic acid (Ser).

It belongs to the pyruvoyl-dependent arginine decarboxylase family. Trimer of an alpha-beta dimer. Requires pyruvate as cofactor.

It localises to the cytoplasm. The catalysed reaction is L-arginine + H(+) = agmatine + CO2. Part of the AaxABC system, catalyzes the decarboxylation of L-arginine. The arginine uptake by the bacterium in the macrophage may be a virulence factor against the host innate immune response. In Chlamydia trachomatis serovar L2 (strain ATCC VR-902B / DSM 19102 / 434/Bu), this protein is Pyruvoyl-dependent arginine decarboxylase AaxB (aaxB).